Here is a 521-residue protein sequence, read N- to C-terminus: Probable protein phosphatase 2C 16 (521 aa).

The PPM-type phosphatase domain maps to 21–327 (KYVVSSMQGW…ENTTVILVQF (307 aa)). Asp-57, Gly-58, Gln-276, and Glu-318 together coordinate Mn(2+). The disordered stretch occupies residues 354-431 (AAPAGASDTS…ADADDGAPKP (78 aa)).

It belongs to the PP2C family. It depends on Mg(2+) as a cofactor. Requires Mn(2+) as cofactor.

It catalyses the reaction O-phospho-L-seryl-[protein] + H2O = L-seryl-[protein] + phosphate. The enzyme catalyses O-phospho-L-threonyl-[protein] + H2O = L-threonyl-[protein] + phosphate. This chain is Probable protein phosphatase 2C 16, found in Oryza sativa subsp. japonica (Rice).